Consider the following 429-residue polypeptide: D-amino acid dehydrogenase 1 (429 aa).

An FAD-binding site is contributed by 3-17 (VLVLGSGVIGVTSAY).

The protein belongs to the DadA oxidoreductase family. The cofactor is FAD.

It catalyses the reaction a D-alpha-amino acid + A + H2O = a 2-oxocarboxylate + AH2 + NH4(+). Functionally, oxidative deamination of D-amino acids. This is D-amino acid dehydrogenase 1 (dadA1) from Ralstonia nicotianae (strain ATCC BAA-1114 / GMI1000) (Ralstonia solanacearum).